A 338-amino-acid polypeptide reads, in one-letter code: Ketol-acid reductoisomerase (NADP(+)) (338 aa).

Residues 1–181 enclose the KARI N-terminal Rossmann domain; it reads MKVYYDKDAD…GGTRGGVIET (181 aa). Residues 24 to 27, arginine 47, and serine 52 each bind NADP(+); that span reads YGSQ. Histidine 107 is an active-site residue. Glycine 133 contacts NADP(+). Positions 182–327 constitute a KARI C-terminal knotted domain; that stretch reads TFKEETETDL…SRLRDMMPWI (146 aa). Residues aspartate 190, glutamate 194, glutamate 226, and glutamate 230 each coordinate Mg(2+). Substrate is bound at residue serine 251.

This sequence belongs to the ketol-acid reductoisomerase family. Mg(2+) serves as cofactor.

The enzyme catalyses (2R)-2,3-dihydroxy-3-methylbutanoate + NADP(+) = (2S)-2-acetolactate + NADPH + H(+). The catalysed reaction is (2R,3R)-2,3-dihydroxy-3-methylpentanoate + NADP(+) = (S)-2-ethyl-2-hydroxy-3-oxobutanoate + NADPH + H(+). It participates in amino-acid biosynthesis; L-isoleucine biosynthesis; L-isoleucine from 2-oxobutanoate: step 2/4. Its pathway is amino-acid biosynthesis; L-valine biosynthesis; L-valine from pyruvate: step 2/4. Involved in the biosynthesis of branched-chain amino acids (BCAA). Catalyzes an alkyl-migration followed by a ketol-acid reduction of (S)-2-acetolactate (S2AL) to yield (R)-2,3-dihydroxy-isovalerate. In the isomerase reaction, S2AL is rearranged via a Mg-dependent methyl migration to produce 3-hydroxy-3-methyl-2-ketobutyrate (HMKB). In the reductase reaction, this 2-ketoacid undergoes a metal-dependent reduction by NADPH to yield (R)-2,3-dihydroxy-isovalerate. The polypeptide is Ketol-acid reductoisomerase (NADP(+)) (Nitrosomonas eutropha (strain DSM 101675 / C91 / Nm57)).